Reading from the N-terminus, the 229-residue chain is ATP synthase subunit a (229 aa).

The next 6 helical transmembrane spans lie at 25–45 (ADAI…SMLA), 82–102 (FFPL…IGLV), 104–124 (GFFP…IVFV), 142–162 (FLGP…IGHF), 181–201 (LVLM…MMLM), and 202–222 (GVLV…IYIQ).

Belongs to the ATPase A chain family. In terms of assembly, F-type ATPases have 2 components, CF(1) - the catalytic core - and CF(0) - the membrane proton channel. CF(1) has five subunits: alpha(3), beta(3), gamma(1), delta(1), epsilon(1). CF(0) has three main subunits: a(1), b(2) and c(9-12). The alpha and beta chains form an alternating ring which encloses part of the gamma chain. CF(1) is attached to CF(0) by a central stalk formed by the gamma and epsilon chains, while a peripheral stalk is formed by the delta and b chains.

It is found in the cell inner membrane. Functionally, key component of the proton channel; it plays a direct role in the translocation of protons across the membrane. The chain is ATP synthase subunit a from Geotalea uraniireducens (strain Rf4) (Geobacter uraniireducens).